A 218-amino-acid polypeptide reads, in one-letter code: Wtf element wtf7 (218 aa).

Residues Met1–Gly23 are disordered. A run of 3 helical transmembrane segments spans residues Leu122–Phe142, Leu152–Leu172, and Ala191–Ile211.

The protein belongs to the WTF family.

The protein localises to the spore membrane. In terms of biological role, may act in meiotic drive. The chain is Wtf element wtf7 from Schizosaccharomyces kambucha (Fission yeast).